A 437-amino-acid polypeptide reads, in one-letter code: ATP-dependent protease ATPase subunit HslU (437 aa).

ATP is bound by residues Val-18, 60–65 (GCGKTE), Asp-250, Glu-315, and Arg-387.

It belongs to the ClpX chaperone family. HslU subfamily. As to quaternary structure, a double ring-shaped homohexamer of HslV is capped on each side by a ring-shaped HslU homohexamer. The assembly of the HslU/HslV complex is dependent on binding of ATP.

It localises to the cytoplasm. Its function is as follows. ATPase subunit of a proteasome-like degradation complex; this subunit has chaperone activity. The binding of ATP and its subsequent hydrolysis by HslU are essential for unfolding of protein substrates subsequently hydrolyzed by HslV. HslU recognizes the N-terminal part of its protein substrates and unfolds these before they are guided to HslV for hydrolysis. This chain is ATP-dependent protease ATPase subunit HslU, found in Methylorubrum populi (strain ATCC BAA-705 / NCIMB 13946 / BJ001) (Methylobacterium populi).